Reading from the N-terminus, the 434-residue chain is Glutamate-1-semialdehyde 2,1-aminomutase 1 (434 aa).

Lys-270 is modified (N6-(pyridoxal phosphate)lysine).

It belongs to the class-III pyridoxal-phosphate-dependent aminotransferase family. HemL subfamily. As to quaternary structure, homodimer. Pyridoxal 5'-phosphate is required as a cofactor.

Its subcellular location is the cytoplasm. It catalyses the reaction (S)-4-amino-5-oxopentanoate = 5-aminolevulinate. The protein operates within porphyrin-containing compound metabolism; protoporphyrin-IX biosynthesis; 5-aminolevulinate from L-glutamyl-tRNA(Glu): step 2/2. This is Glutamate-1-semialdehyde 2,1-aminomutase 1 from Bacillus anthracis (strain CDC 684 / NRRL 3495).